A 792-amino-acid chain; its full sequence is Ribosome biogenesis protein BOP1 homolog (792 aa).

A compositionally biased stretch (basic residues) spans 1 to 11 (MTKKRTVKRKV). A disordered region spans residues 1–167 (MTKKRTVKRK…ESDTSDEEDI (167 aa)). 4 stretches are compositionally biased toward acidic residues: residues 44–53 (EDTTDDEGID), 60–72 (SSED…DEEG), 82–117 (EAEE…ESDA), and 157–166 (EESDTSDEED). 7 WD repeats span residues 453-494 (GHTD…RTIE), 496-534 (NDVV…KLLI), 578-620 (THFK…SQIP), 623-661 (KSKG…LIKK), 664-703 (TNSK…KPYQ), 707-746 (LHRN…DLLQ), and 762-792 (RDEF…RLYT).

The protein belongs to the WD repeat BOP1/ERB1 family.

The protein localises to the nucleus. Its subcellular location is the nucleolus. It is found in the nucleoplasm. Its function is as follows. Required for maturation of ribosomal RNAs and formation of the large ribosomal subunit. This is Ribosome biogenesis protein BOP1 homolog from Drosophila mojavensis (Fruit fly).